We begin with the raw amino-acid sequence, 295 residues long: F-box only protein 6 (295 aa).

In terms of domain architecture, F-box spans methionine 1 to lysine 48. The region spanning phenylalanine 69–histidine 250 is the FBA domain. Phosphoserine is present on residues serine 249 and serine 276. Position 280 is a phosphothreonine (threonine 280).

In terms of assembly, interacts with CHEK1 and CUL1. Part of a SCF (SKP1-cullin-F-box) protein ligase complex. Interacts with VCP. In terms of tissue distribution, present in liver and kidney (at protein level). Widely expressed.

The protein resides in the cytoplasm. Its pathway is protein modification; protein ubiquitination. Substrate-recognition component of some SCF (SKP1-CUL1-F-box protein)-type E3 ubiquitin ligase complexes. Involved in DNA damage response by specifically recognizing activated CHEK1 (phosphorylated on 'Ser-345'), promoting its ubiquitination and degradation. Ubiquitination of CHEK1 is required to ensure that activated CHEK1 does not accumulate as cells progress through S phase, or when replication forks encounter transient impediments during normal DNA replication. Involved in endoplasmic reticulum-associated degradation pathway (ERAD) for misfolded lumenal proteins by recognizing and binding sugar chains on unfolded glycoproteins that are retrotranslocated into the cytosol and promoting their ubiquitination and subsequent degradation. Able to recognize and bind denatured glycoproteins, which are modified with not only high-mannose but also complex-type oligosaccharides. Also recognizes sulfated glycans. In Mus musculus (Mouse), this protein is F-box only protein 6 (Fbxo6).